Here is a 345-residue protein sequence, read N- to C-terminus: RNA polymerase II holoenzyme cyclin-like subunit (345 aa).

The Cyclin N-terminal domain maps to 53–144; sequence QQINRLGKRM…IGECEFYLIS (92 aa). Residues 256 to 285 form a disordered region; the sequence is GLTPQSSSGLQAMLPPQSPAGEGPAEGNKN.

It belongs to the cyclin family. Cyclin C subfamily. Component of the srb8-11 complex, a regulatory module of the Mediator complex.

The protein resides in the nucleus. Its function is as follows. Component of the srb8-11 complex. The srb8-11 complex is a regulatory module of the Mediator complex which is itself involved in regulation of basal and activated RNA polymerase II-dependent transcription. The srb8-11 complex may be involved in the transcriptional repression of a subset of genes regulated by Mediator. It may inhibit the association of the Mediator complex with RNA polymerase II to form the holoenzyme complex. The srb8-11 complex phosphorylates the C-terminal domain (CTD) of the largest subunit of RNA polymerase II. The polypeptide is RNA polymerase II holoenzyme cyclin-like subunit (ssn8) (Neurospora crassa (strain ATCC 24698 / 74-OR23-1A / CBS 708.71 / DSM 1257 / FGSC 987)).